We begin with the raw amino-acid sequence, 129 residues long: Dormancy-associated protein 2 (129 aa).

Residues M1–A25 form the signal peptide. The interval G110 to N129 is disordered.

This sequence belongs to the DRM1/ARP family. In terms of tissue distribution, expressed in axilary buds. Detected in growing stems, leaflets and floral organs, but not in roots.

This Pisum sativum (Garden pea) protein is Dormancy-associated protein 2.